Consider the following 434-residue polypeptide: O-phosphoseryl-tRNA(Sec) selenium transferase (434 aa).

Residues 1-40 (MGLNITGLIPKHMENRGKLTLKENLKIIENILEQRKAPEN) are tetramerization. Arg-71 is a pyridoxal 5'-phosphate binding site. The tract at residues 92 to 102 (GRSGNLIDPQP) is phosphate loop (P-loop). Substrate is bound by residues Arg-93, Ser-94, and Gln-101. Lys-277 is subject to N6-(pyridoxal phosphate)lysine. A substrate-binding site is contributed by Arg-306.

The protein belongs to the SepSecS family. Homotetramer. Pyridoxal 5'-phosphate is required as a cofactor.

It catalyses the reaction O-phospho-L-seryl-tRNA(Sec) + selenophosphate + H2O = L-selenocysteinyl-tRNA(Sec) + 2 phosphate. The protein operates within aminoacyl-tRNA biosynthesis; selenocysteinyl-tRNA(Sec) biosynthesis; selenocysteinyl-tRNA(Sec) from L-seryl-tRNA(Sec) (archaeal/eukaryal route): step 2/2. Functionally, converts O-phosphoseryl-tRNA(Sec) to selenocysteinyl-tRNA(Sec) required for selenoprotein biosynthesis. The chain is O-phosphoseryl-tRNA(Sec) selenium transferase (spcS) from Methanocaldococcus jannaschii (strain ATCC 43067 / DSM 2661 / JAL-1 / JCM 10045 / NBRC 100440) (Methanococcus jannaschii).